Consider the following 186-residue polypeptide: Interferon beta (186 aa).

The signal sequence occupies residues 1-21 (MTGRCILQIALLVCFFTTAHS). Tyr-24 is subject to Phosphotyrosine. Residues Asn-46, Asn-101, Asn-131, and Asn-136 are each glycosylated (N-linked (GlcNAc...) asparagine). Cys-52 and Cys-161 are joined by a disulfide.

It belongs to the alpha/beta interferon family. As to quaternary structure, monomer.

It is found in the secreted. In terms of biological role, type I interferon cytokine that plays a key role in the innate immune response to infection, developing tumors and other inflammatory stimuli. Signals via binding to high-affinity (IFNAR2) and low-affinity (IFNAR1) heterodimeric receptor, activating the canonical Jak-STAT signaling pathway resulting in transcriptional activation or repression of interferon-regulated genes that encode the effectors of the interferon response, such as antiviral proteins, regulators of cell proliferation and differentiation, and immunoregulatory proteins. Signals mostly via binding to a IFNAR1-IFNAR2 heterodimeric receptor, but can also function with IFNAR1 alone and independently of Jak-STAT pathways. Elicits a wide variety of responses, including antiviral and antibacterial activities, and can regulate the development of B-cells, myelopoiesis and lipopolysaccharide (LPS)-inducible production of tumor necrosis factor. Plays a role in neuronal homeostasis by regulating dopamine turnover and protecting dopaminergic neurons: acts by promoting neuronal autophagy and alpha-synuclein clearance, thereby preventing dopaminergic neuron loss. IFNB1 is more potent than interferon-alpha (IFN-alpha) in inducing the apoptotic and antiproliferative pathways required for control of tumor cell growth. In Felis catus (Cat), this protein is Interferon beta (IFNB1).